We begin with the raw amino-acid sequence, 90 residues long: uncharacterized protein (90 aa).

This sequence to E.coli RlpA.

This is an uncharacterized protein from Synechocystis sp. (strain ATCC 27184 / PCC 6803 / Kazusa).